Here is a 316-residue protein sequence, read N- to C-terminus: Glutathione synthetase (316 aa).

Residues 125–310 enclose the ATP-grasp domain; the sequence is KLFTAWFSDL…ITGMLMDAIE (186 aa). 151-207 is a binding site for ATP; it reads WEKHSDIILKPLDGMGGASIFRVKEGDPNLGVIAETLTEHGTRYCMAQNYLPAIKDG. E281 and N283 together coordinate Mg(2+).

The protein belongs to the prokaryotic GSH synthase family. Requires Mg(2+) as cofactor. The cofactor is Mn(2+).

The enzyme catalyses gamma-L-glutamyl-L-cysteine + glycine + ATP = glutathione + ADP + phosphate + H(+). It participates in sulfur metabolism; glutathione biosynthesis; glutathione from L-cysteine and L-glutamate: step 2/2. This Escherichia coli O6:H1 (strain CFT073 / ATCC 700928 / UPEC) protein is Glutathione synthetase.